Here is a 467-residue protein sequence, read N- to C-terminus: Glutamate--tRNA ligase (467 aa).

The 'HIGH' region motif lies at 9-19; sequence PSPTGYLHIGG. The 'KMSKS' region signature appears at 237 to 241; sequence KLSKR. ATP is bound at residue Lys240.

This sequence belongs to the class-I aminoacyl-tRNA synthetase family. Glutamate--tRNA ligase type 1 subfamily. In terms of assembly, monomer.

The protein resides in the cytoplasm. It carries out the reaction tRNA(Glu) + L-glutamate + ATP = L-glutamyl-tRNA(Glu) + AMP + diphosphate. Catalyzes the attachment of glutamate to tRNA(Glu) in a two-step reaction: glutamate is first activated by ATP to form Glu-AMP and then transferred to the acceptor end of tRNA(Glu). This is Glutamate--tRNA ligase from Xylella fastidiosa (strain M23).